Consider the following 233-residue polypeptide: LexA repressor (233 aa).

Positions 26–46 (FDEMKDALDLRSKSGIHRLIT) form a DNA-binding region, H-T-H motif. Active-site for autocatalytic cleavage activity residues include Ser154 and Lys192.

This sequence belongs to the peptidase S24 family. Homodimer.

It carries out the reaction Hydrolysis of Ala-|-Gly bond in repressor LexA.. Functionally, represses a number of genes involved in the response to DNA damage (SOS response), including recA and lexA. In the presence of single-stranded DNA, RecA interacts with LexA causing an autocatalytic cleavage which disrupts the DNA-binding part of LexA, leading to derepression of the SOS regulon and eventually DNA repair. This is LexA repressor from Nitrobacter winogradskyi (strain ATCC 25391 / DSM 10237 / CIP 104748 / NCIMB 11846 / Nb-255).